A 93-amino-acid chain; its full sequence is Aspartyl/glutamyl-tRNA(Asn/Gln) amidotransferase subunit C (93 aa).

Belongs to the GatC family. Heterotrimer of A, B and C subunits.

It catalyses the reaction L-glutamyl-tRNA(Gln) + L-glutamine + ATP + H2O = L-glutaminyl-tRNA(Gln) + L-glutamate + ADP + phosphate + H(+). The catalysed reaction is L-aspartyl-tRNA(Asn) + L-glutamine + ATP + H2O = L-asparaginyl-tRNA(Asn) + L-glutamate + ADP + phosphate + 2 H(+). In terms of biological role, allows the formation of correctly charged Asn-tRNA(Asn) or Gln-tRNA(Gln) through the transamidation of misacylated Asp-tRNA(Asn) or Glu-tRNA(Gln) in organisms which lack either or both of asparaginyl-tRNA or glutaminyl-tRNA synthetases. The reaction takes place in the presence of glutamine and ATP through an activated phospho-Asp-tRNA(Asn) or phospho-Glu-tRNA(Gln). The sequence is that of Aspartyl/glutamyl-tRNA(Asn/Gln) amidotransferase subunit C from Nautilia profundicola (strain ATCC BAA-1463 / DSM 18972 / AmH).